The primary structure comprises 119 residues: Large ribosomal subunit protein bL20 (119 aa).

This sequence belongs to the bacterial ribosomal protein bL20 family.

Binds directly to 23S ribosomal RNA and is necessary for the in vitro assembly process of the 50S ribosomal subunit. It is not involved in the protein synthesizing functions of that subunit. The sequence is that of Large ribosomal subunit protein bL20 from Xanthomonas campestris pv. campestris (strain 8004).